A 467-amino-acid polypeptide reads, in one-letter code: ATP synthase subunit beta (467 aa).

Residue 154 to 161 (GGAGVGKT) coordinates ATP.

It belongs to the ATPase alpha/beta chains family. F-type ATPases have 2 components, CF(1) - the catalytic core - and CF(0) - the membrane proton channel. CF(1) has five subunits: alpha(3), beta(3), gamma(1), delta(1), epsilon(1). CF(0) has three main subunits: a(1), b(2) and c(9-12). The alpha and beta chains form an alternating ring which encloses part of the gamma chain. CF(1) is attached to CF(0) by a central stalk formed by the gamma and epsilon chains, while a peripheral stalk is formed by the delta and b chains.

It localises to the cell inner membrane. The enzyme catalyses ATP + H2O + 4 H(+)(in) = ADP + phosphate + 5 H(+)(out). Its function is as follows. Produces ATP from ADP in the presence of a proton gradient across the membrane. The catalytic sites are hosted primarily by the beta subunits. The polypeptide is ATP synthase subunit beta (Leptospira borgpetersenii serovar Hardjo-bovis (strain JB197)).